We begin with the raw amino-acid sequence, 163 residues long: 3-isopropylmalate dehydratase small subunit (163 aa).

It belongs to the LeuD family. LeuD type 2 subfamily. As to quaternary structure, heterodimer of LeuC and LeuD.

It carries out the reaction (2R,3S)-3-isopropylmalate = (2S)-2-isopropylmalate. Its pathway is amino-acid biosynthesis; L-leucine biosynthesis; L-leucine from 3-methyl-2-oxobutanoate: step 2/4. Its function is as follows. Catalyzes the isomerization between 2-isopropylmalate and 3-isopropylmalate, via the formation of 2-isopropylmaleate. This chain is 3-isopropylmalate dehydratase small subunit, found in Brachyspira hyodysenteriae (strain ATCC 49526 / WA1).